Here is a 360-residue protein sequence, read N- to C-terminus: S-adenosylmethionine:tRNA ribosyltransferase-isomerase (360 aa).

This sequence belongs to the QueA family. As to quaternary structure, monomer.

It is found in the cytoplasm. It catalyses the reaction 7-aminomethyl-7-carbaguanosine(34) in tRNA + S-adenosyl-L-methionine = epoxyqueuosine(34) in tRNA + adenine + L-methionine + 2 H(+). The protein operates within tRNA modification; tRNA-queuosine biosynthesis. In terms of biological role, transfers and isomerizes the ribose moiety from AdoMet to the 7-aminomethyl group of 7-deazaguanine (preQ1-tRNA) to give epoxyqueuosine (oQ-tRNA). This Burkholderia pseudomallei (strain K96243) protein is S-adenosylmethionine:tRNA ribosyltransferase-isomerase.